The sequence spans 689 residues: Solute carrier family 22 member 23 (689 aa).

Disordered stretches follow at residues M1 to A55 and T162 to N188. A glycan (N-linked (GlcNAc...) asparagine) is linked at N24. Residues W165–T177 show a composition bias toward polar residues. 2 helical membrane-spanning segments follow: residues F229–V249 and P253–V273. N-linked (GlcNAc...) asparagine glycosylation is present at N274. 8 helical membrane-spanning segments follow: residues F283–L303, F310–L330, V339–P359, T466–G486, G489–L509, I541–F561, C572–I592, and F601–L621.

It belongs to the major facilitator (TC 2.A.1) superfamily. Organic cation transporter (TC 2.A.1.19) family.

The protein localises to the membrane. The sequence is that of Solute carrier family 22 member 23 (Slc22a23) from Mus musculus (Mouse).